The sequence spans 592 residues: Cryptochrome-2 (592 aa).

The region spanning 21-150 (ASSVHWFRKG…EVVTENSHTL (130 aa)) is the Photolyase/cryptochrome alpha/beta domain. Lysine 29 participates in a covalent cross-link: Glycyl lysine isopeptide (Lys-Gly) (interchain with G-Cter in ubiquitin). Residue serine 89 is modified to Phosphoserine. Glycyl lysine isopeptide (Lys-Gly) (interchain with G-Cter in ubiquitin) cross-links involve residues lysine 125 and lysine 241. Serine 265 carries the phosphoserine; by MAPK modification. Serine 270 contributes to the FAD binding site. Serine 298 carries the post-translational modification Phosphoserine. Position 307 (glutamine 307) interacts with FAD. Lysine 347 participates in a covalent cross-link: Glycyl lysine isopeptide (Lys-Gly) (interchain with G-Cter in ubiquitin). FAD-binding positions include histidine 373 and 405 to 407 (DAD). The interval 389–488 (WVSWESGVRV…IIGVDYPRPI (100 aa)) is required for inhibition of CLOCK-BMAL1-mediated transcription. Glycyl lysine isopeptide (Lys-Gly) (interchain with G-Cter in ubiquitin) cross-links involve residues lysine 474 and lysine 503. The segment at 532-592 (VAEPGSSQAG…PTQEPASKDS (61 aa)) is disordered. Polar residues predominate over residues 536–547 (GSSQAGSISNTG). Position 553 is a phosphoserine; by GSK3-beta (serine 553). Phosphoserine; by DYRK1A and MAPK is present on serine 557. A compositionally biased stretch (polar residues) spans 582–592 (MPTQEPASKDS).

This sequence belongs to the DNA photolyase class-1 family. In terms of assembly, component of the circadian core oscillator, which includes the CRY proteins, CLOCK or NPAS2, BMAL1 or BMAL2, CSNK1D and/or CSNK1E, TIMELESS, and the PER proteins. Interacts with TIMELESS. Interacts directly with PER1, PER2 and PER3; interaction with PER2 inhibits its ubiquitination and vice versa. Interacts with CLOCK-BMAL1. Interacts with BMAL1. Interacts with CLOCK. Interacts with NFIL3. Interacts with FBXL3 and FBXL21. FBXL3, PER2 and the cofactor FAD compete for overlapping binding sites. FBXL3 cannot bind CRY2 that interacts already with PER2 or that contains bound FAD. Interacts with PPP5C (via TPR repeats); the interaction down-regulates the PPP5C phosphatase activity on CSNK1E. Interacts with nuclear receptors AR and NR3C1/GR; the interaction is ligand dependent. Interacts with PRKDC. Interacts with CIART. Interacts with DDB1, USP7 and TARDBP. Interacts with HNF4A. Interacts with PPARA. Interacts with PPARG in a ligand-dependent manner. Interacts with PPARD (via domain NR LBD) in a ligand-dependent manner. Interacts with NR1I2 (via domain NR LBD) in a ligand-dependent manner. Interacts with NR1I3 and VDR in a ligand-dependent manner. The cofactor is FAD. It depends on (6R)-5,10-methylene-5,6,7,8-tetrahydrofolate as a cofactor. Phosphorylation on Ser-265 by MAPK is important for the inhibition of CLOCK-BMAL1-mediated transcriptional activity. Phosphorylation by CSKNE requires interaction with PER1 or PER2. Phosphorylated in a circadian manner at Ser-553 and Ser-557 in the suprachiasmatic nucleus (SCN) and liver. Phosphorylation at Ser-557 by DYRK1A promotes subsequent phosphorylation at Ser-553 by GSK3-beta: the two-step phosphorylation at the neighboring Ser residues leads to its proteasomal degradation. Post-translationally, ubiquitinated by the SCF(FBXL3) and SCF(FBXL21) complexes, regulating the balance between degradation and stabilization. The SCF(FBXL3) complex is mainly nuclear and mediates ubiquitination and subsequent degradation of CRY2. In contrast, cytoplasmic SCF(FBXL21) complex-mediated ubiquitination leads to stabilize CRY2 and counteract the activity of the SCF(FBXL3) complex. The SCF(FBXL3) and SCF(FBXL21) complexes probably mediate ubiquitination at different Lys residues. The SCF(FBXL3) complex recognizes and binds CRY2 phosphorylated at Ser-553 and Ser-557. Ubiquitination may be inhibited by PER2. Deubiquitinated by USP7. In terms of tissue distribution, expression in the retina is restricted to the photoreceptor layer (at protein level). Expressed in all tissues examined including heart, brain, spleen, lung, liver, skeletal muscle, kidney and testis. Weak expression in spleen.

It is found in the cytoplasm. It localises to the nucleus. With respect to regulation, KL001 (N-[3-(9H-carbazol-9-yl)-2-hydroxypropyl]-N-(2-furanylmethyl)-methanesulfonamide) binds to CRY1 and stabilizes it by inhibiting FBXL3- and ubiquitin-dependent degradation of CRY1 resulting in lengthening of the circadian periods. KL001-mediated CRY1 stabilization can inhibit glucagon-induced gluconeogenesis in primary hepatocytes. Its function is as follows. Transcriptional repressor which forms a core component of the circadian clock. The circadian clock, an internal time-keeping system, regulates various physiological processes through the generation of approximately 24 hour circadian rhythms in gene expression, which are translated into rhythms in metabolism and behavior. It is derived from the Latin roots 'circa' (about) and 'diem' (day) and acts as an important regulator of a wide array of physiological functions including metabolism, sleep, body temperature, blood pressure, endocrine, immune, cardiovascular, and renal function. Consists of two major components: the central clock, residing in the suprachiasmatic nucleus (SCN) of the brain, and the peripheral clocks that are present in nearly every tissue and organ system. Both the central and peripheral clocks can be reset by environmental cues, also known as Zeitgebers (German for 'timegivers'). The predominant Zeitgeber for the central clock is light, which is sensed by retina and signals directly to the SCN. The central clock entrains the peripheral clocks through neuronal and hormonal signals, body temperature and feeding-related cues, aligning all clocks with the external light/dark cycle. Circadian rhythms allow an organism to achieve temporal homeostasis with its environment at the molecular level by regulating gene expression to create a peak of protein expression once every 24 hours to control when a particular physiological process is most active with respect to the solar day. Transcription and translation of core clock components (CLOCK, NPAS2, BMAL1, BMAL2, PER1, PER2, PER3, CRY1 and CRY2) plays a critical role in rhythm generation, whereas delays imposed by post-translational modifications (PTMs) are important for determining the period (tau) of the rhythms (tau refers to the period of a rhythm and is the length, in time, of one complete cycle). A diurnal rhythm is synchronized with the day/night cycle, while the ultradian and infradian rhythms have a period shorter and longer than 24 hours, respectively. Disruptions in the circadian rhythms contribute to the pathology of cardiovascular diseases, cancer, metabolic syndromes and aging. A transcription/translation feedback loop (TTFL) forms the core of the molecular circadian clock mechanism. Transcription factors, CLOCK or NPAS2 and BMAL1 or BMAL2, form the positive limb of the feedback loop, act in the form of a heterodimer and activate the transcription of core clock genes and clock-controlled genes (involved in key metabolic processes), harboring E-box elements (5'-CACGTG-3') within their promoters. The core clock genes: PER1/2/3 and CRY1/2 which are transcriptional repressors form the negative limb of the feedback loop and interact with the CLOCK|NPAS2-BMAL1|BMAL2 heterodimer inhibiting its activity and thereby negatively regulating their own expression. This heterodimer also activates nuclear receptors NR1D1/2 and RORA/B/G, which form a second feedback loop and which activate and repress BMAL1 transcription, respectively. CRY1 and CRY2 have redundant functions but also differential and selective contributions at least in defining the pace of the SCN circadian clock and its circadian transcriptional outputs. Less potent transcriptional repressor in cerebellum and liver than CRY1, though less effective in lengthening the period of the SCN oscillator. Seems to play a critical role in tuning SCN circadian period by opposing the action of CRY1. With CRY1, dispensable for circadian rhythm generation but necessary for the development of intercellular networks for rhythm synchrony. May mediate circadian regulation of cAMP signaling and gluconeogenesis by blocking glucagon-mediated increases in intracellular cAMP concentrations and in CREB1 phosphorylation. Besides its role in the maintenance of the circadian clock, is also involved in the regulation of other processes. Plays a key role in glucose and lipid metabolism modulation, in part, through the transcriptional regulation of genes involved in these pathways, such as LEP or ACSL4. Represses glucocorticoid receptor NR3C1/GR-induced transcriptional activity by binding to glucocorticoid response elements (GREs). Represses the CLOCK-BMAL1 induced transcription of BHLHE40/DEC1 and NAMPT. Represses PPARD and its target genes in the skeletal muscle and limits exercise capacity. Represses the transcriptional activity of NR1I2. The chain is Cryptochrome-2 (Cry2) from Mus musculus (Mouse).